We begin with the raw amino-acid sequence, 123 residues long: uncharacterized protein (123 aa).

Over residues 1–12 the composition is skewed to polar residues; that stretch reads MALNNVSLSSGD. Disordered regions lie at residues 1 to 25 and 53 to 91; these read MALN…SHGD and PRQA…RFSP. Positions 61-82 are enriched in basic and acidic residues; the sequence is VRAESRRVDGGGRSPREPDGRG.

This is an uncharacterized protein from Homo sapiens (Human).